A 521-amino-acid polypeptide reads, in one-letter code: GMP synthase [glutamine-hydrolyzing] (521 aa).

The Glutamine amidotransferase type-1 domain maps to Lys8–Leu203. The active-site Nucleophile is the Cys85. Catalysis depends on residues His177 and Glu179. The region spanning Trp204–Arg396 is the GMPS ATP-PPase domain. Ser231–Ser237 is a binding site for ATP.

In terms of assembly, homodimer.

The enzyme catalyses XMP + L-glutamine + ATP + H2O = GMP + L-glutamate + AMP + diphosphate + 2 H(+). The protein operates within purine metabolism; GMP biosynthesis; GMP from XMP (L-Gln route): step 1/1. Its function is as follows. Catalyzes the synthesis of GMP from XMP. This Xanthomonas axonopodis pv. citri (strain 306) protein is GMP synthase [glutamine-hydrolyzing].